The chain runs to 686 residues: Potassium-transporting ATPase ATP-binding subunit 2 (686 aa).

4 helical membrane-spanning segments follow: residues 37-57 (MFVV…PNLF), 64-84 (MILY…FANF), 223-243 (LLVS…PMAI), and 255-275 (VALT…AIGI). Asp-306 functions as the 4-aspartylphosphate intermediate in the catalytic mechanism. ATP contacts are provided by residues Asp-343, Glu-347, 376–383 (FTAQTRMS), and Lys-395. Asp-518 and Asp-522 together coordinate Mg(2+). 3 helical membrane passes run 588–608 (FAII…LNIM), 616–636 (AILS…PLAM), and 656–676 (VYGV…DLVI).

It belongs to the cation transport ATPase (P-type) (TC 3.A.3) family. Type IA subfamily. In terms of assembly, the system is composed of three essential subunits: KdpA, KdpB and KdpC.

The protein localises to the cell membrane. It carries out the reaction K(+)(out) + ATP + H2O = K(+)(in) + ADP + phosphate + H(+). Part of the high-affinity ATP-driven potassium transport (or Kdp) system, which catalyzes the hydrolysis of ATP coupled with the electrogenic transport of potassium into the cytoplasm. This subunit is responsible for energy coupling to the transport system and for the release of the potassium ions to the cytoplasm. The polypeptide is Potassium-transporting ATPase ATP-binding subunit 2 (Listeria innocua serovar 6a (strain ATCC BAA-680 / CLIP 11262)).